A 187-amino-acid chain; its full sequence is MDFFTDQVKKKFSDKKPESSDPEPNHNKNKPGHTEPTTHKPGHGEPTTHKPVSNTDPTTHRPATNAELMASAKIVAEAAQAAARHESDKLDKAKVAGATADILDAASRYGKLDEKSGVGQYLEKAEQYLHKYETSHSHSSTGGTGSHGNVGGHGGGAGAPAAKKEDEKSGGGHGFGDYAKMAQGFMK.

M1 carries the N-acetylmethionine modification. Disordered regions lie at residues 1–66 and 132–176; these read MDFF…ATNA and YETS…HGFG. Basic and acidic residues predominate over residues 7 to 48; that stretch reads QVKKKFSDKKPESSDPEPNHNKNKPGHTEPTTHKPGHGEPTT. The segment covering 142–158 has biased composition (gly residues); the sequence is GGTGSHGNVGGHGGGAG.

Interacts with RPS2. Expressed in roots, leaves, flowers and siliques.

In terms of biological role, prevents accumulation of abscisic acid (ABA) after heat treatment, thus reducing thermotolerance. May be a negative regulator of the ABA signaling/synthesis pathway. Required for defense responses against avirulent bacteria such as P.syringae pv. tomato DC3000 (avrRpt2). The protein is Nodulin-related protein 1 of Arabidopsis thaliana (Mouse-ear cress).